Here is a 347-residue protein sequence, read N- to C-terminus: Holliday junction branch migration complex subunit RuvB (347 aa).

The tract at residues Thr-4–Tyr-185 is large ATPase domain (RuvB-L). ATP is bound by residues Leu-24, Arg-25, Gly-66, Lys-69, Thr-70, Thr-71, Glu-132 to Tyr-134, Arg-175, Tyr-185, and Arg-222. Thr-70 is a Mg(2+) binding site. The small ATPAse domain (RuvB-S) stretch occupies residues Ser-186–Asp-256. Positions Ala-259–Gln-347 are head domain (RuvB-H). Arg-295, Arg-314, and Arg-319 together coordinate DNA.

Belongs to the RuvB family. As to quaternary structure, homohexamer. Forms an RuvA(8)-RuvB(12)-Holliday junction (HJ) complex. HJ DNA is sandwiched between 2 RuvA tetramers; dsDNA enters through RuvA and exits via RuvB. An RuvB hexamer assembles on each DNA strand where it exits the tetramer. Each RuvB hexamer is contacted by two RuvA subunits (via domain III) on 2 adjacent RuvB subunits; this complex drives branch migration. In the full resolvosome a probable DNA-RuvA(4)-RuvB(12)-RuvC(2) complex forms which resolves the HJ.

It localises to the cytoplasm. It carries out the reaction ATP + H2O = ADP + phosphate + H(+). In terms of biological role, the RuvA-RuvB-RuvC complex processes Holliday junction (HJ) DNA during genetic recombination and DNA repair, while the RuvA-RuvB complex plays an important role in the rescue of blocked DNA replication forks via replication fork reversal (RFR). RuvA specifically binds to HJ cruciform DNA, conferring on it an open structure. The RuvB hexamer acts as an ATP-dependent pump, pulling dsDNA into and through the RuvAB complex. RuvB forms 2 homohexamers on either side of HJ DNA bound by 1 or 2 RuvA tetramers; 4 subunits per hexamer contact DNA at a time. Coordinated motions by a converter formed by DNA-disengaged RuvB subunits stimulates ATP hydrolysis and nucleotide exchange. Immobilization of the converter enables RuvB to convert the ATP-contained energy into a lever motion, pulling 2 nucleotides of DNA out of the RuvA tetramer per ATP hydrolyzed, thus driving DNA branch migration. The RuvB motors rotate together with the DNA substrate, which together with the progressing nucleotide cycle form the mechanistic basis for DNA recombination by continuous HJ branch migration. Branch migration allows RuvC to scan DNA until it finds its consensus sequence, where it cleaves and resolves cruciform DNA. The sequence is that of Holliday junction branch migration complex subunit RuvB from Nitrosospira multiformis (strain ATCC 25196 / NCIMB 11849 / C 71).